The sequence spans 880 residues: Leucine--tRNA ligase (880 aa).

The 'HIGH' region motif lies at 46-56 (PYPSGALHMGH). The 'KMSKS' region signature appears at 638-642 (KMSKS). K641 provides a ligand contact to ATP.

The protein belongs to the class-I aminoacyl-tRNA synthetase family.

Its subcellular location is the cytoplasm. The catalysed reaction is tRNA(Leu) + L-leucine + ATP = L-leucyl-tRNA(Leu) + AMP + diphosphate. This chain is Leucine--tRNA ligase, found in Xanthomonas oryzae pv. oryzae (strain MAFF 311018).